Consider the following 441-residue polypeptide: Nuclear distribution protein nudF (441 aa).

In terms of domain architecture, LisH spans Q9–V41. WD repeat units follow at residues G87–K128, H130–R170, G174–T221, G224–T263, G266–L326, G328–R367, A372–P402, and A403–A440. The disordered stretch occupies residues G390–P415. Residues T398 to G410 show a composition bias toward low complexity.

It belongs to the WD repeat LIS1/nudF family. In terms of assembly, self-associates. Interacts with nudE and dynein.

It is found in the cytoplasm. It localises to the cytoskeleton. The protein resides in the spindle pole. Its function is as follows. Positively regulates the activity of the minus-end directed microtubule motor protein dynein. May enhance dynein-mediated microtubule sliding by targeting dynein to the microtubule plus end. Required for nuclear migration during vegetative growth as well as development. Required for retrograde early endosome (EE) transport from the hyphal tip. Required for localization of dynein to the mitotic spindle poles. Recruits additional proteins to the dynein complex at SPBs. The sequence is that of Nuclear distribution protein nudF from Neosartorya fischeri (strain ATCC 1020 / DSM 3700 / CBS 544.65 / FGSC A1164 / JCM 1740 / NRRL 181 / WB 181) (Aspergillus fischerianus).